We begin with the raw amino-acid sequence, 688 residues long: ERI1 exoribonuclease 2 (688 aa).

In terms of domain architecture, Exonuclease spans 37-226; it reads LIVVDFESTC…DDSRNTALLA (190 aa). Residues D41, E43, and D156 each coordinate Mg(2+). The Proton acceptor role is filled by E43. E43 is an AMP binding site. H213 acts as the Proton acceptor in catalysis. H213 is a binding site for AMP. D218 is a Mg(2+) binding site. Residues 337–360 are compositionally biased toward polar residues; sequence VDQLHSPTLNPPLTMQKPSKSDQL. 2 disordered regions span residues 337–367 and 523–546; these read VDQL…DSSK and DPLL…TKRQ. Zn(2+) contacts are provided by C594, C596, C619, and C631. A GRF-type zinc finger spans residues 594–640; that stretch reads CKCGRRSKRLIVSNNGPNHGKAFYCCPVGKYQQDRKCCGYFKWEQTL.

The protein belongs to the ERI2 family. The cofactor is Mg(2+).

The chain is ERI1 exoribonuclease 2 (Eri2) from Mus musculus (Mouse).